Consider the following 705-residue polypeptide: Choline transporter-like protein 2 (705 aa).

The Cytoplasmic segment spans residues 1–33; sequence MGKDSQHYYGKHGTPQKYDPTFKGPIYNRGCTD. Threonine 14 bears the Phosphothreonine mark. The chain crosses the membrane as a helical span at residues 34–54; the sequence is IICCVLLFLAIVGYVAVGIIA. Over 55–232 the chain is Extracellular; that stretch reads WTHGDPRKVI…QIFEDYTVSW (178 aa). Residues asparagine 187 and asparagine 200 are each glycosylated (N-linked (GlcNAc...) asparagine). The chain crosses the membrane as a helical span at residues 233–253; sequence YWIVIGLVIAMLLSLMFIVLL. The Cytoplasmic portion of the chain corresponds to 254 to 256; that stretch reads RFL. Residues 257–277 traverse the membrane as a helical segment; it reads AGVMVWVMIVMVILVLGYGIF. The Extracellular portion of the chain corresponds to 278–315; the sequence is HCYAEYSRLRGEAGSDVSLVDLGFQTDLRVYLHLRQTW. A helical membrane pass occupies residues 316 to 336; it reads MAFMIILSILEVVIILLLIFL. Over 337–364 the chain is Cytoplasmic; the sequence is RKRILIAIALIKEASRAVGHVMCSMLYP. A helical transmembrane segment spans residues 365–385; that stretch reads LVTFFLLCLCIAYWASTSVFL. Over 386 to 453 the chain is Extracellular; the sequence is STSNVAVYKI…LQIFNAFMFF (68 aa). N-linked (GlcNAc...) asparagine glycosylation occurs at asparagine 416. A helical transmembrane segment spans residues 454-476; it reads WLANFVLALGQVTLAGAFASYYW. Topologically, residues 477-503 are cytoplasmic; that stretch reads AMRKPDDMPAFPLFSAFGRALRYHTGS. The helical transmembrane segment at 504–524 threads the bilayer; that stretch reads LAFGSLILAIVQIIRVMLEYL. The Extracellular segment spans residues 525-562; that stretch reads DQRLKAAQNKFAKFLMVCLKCCFWCLEKFIKFLNRNAY. Residues 563-583 form a helical membrane-spanning segment; the sequence is IMIAIYGTNFCTSARNAFFLL. Residues 584-598 lie on the Cytoplasmic side of the membrane; sequence MRNIIRVAVLDKVTD. A helical transmembrane segment spans residues 599–619; the sequence is FLFLLGKLLIVGSVGILAFFF. Topologically, residues 620 to 637 are extracellular; that stretch reads FTHRIRIVQDTAPPLNYY. The chain crosses the membrane as a helical span at residues 638–658; that stretch reads WVPILTVIIGSYLIAHGFFSV. The Cytoplasmic segment spans residues 659 to 705; sequence YGMCVDTLFLCFLEDLERNDGSAERPYFMSSTLKKLLNKTNKKVAES.

This sequence belongs to the CTL (choline transporter-like) family. In terms of assembly, interacts with COCH. Post-translationally, N-glycosylated.

The protein resides in the cell membrane. The protein localises to the mitochondrion outer membrane. It carries out the reaction choline(out) + n H(+)(in) = choline(in) + n H(+)(out). The catalysed reaction is ethanolamine(out) + n H(+)(in) = ethanolamine(in) + n H(+)(out). In terms of biological role, exhibits choline transporter activity, as choline/H+ antiporter. Also acts as a low-affinity ethanolamine/H+ antiporter, regulating the supply of extracellular ethanolamine (Etn) for the CDP-Etn pathway, redistribute intracellular Etn and balance the CDP-Cho and CDP-Etn arms of the Kennedy pathway. In Rattus norvegicus (Rat), this protein is Choline transporter-like protein 2 (Slc44a2).